Consider the following 184-residue polypeptide: Female-specific protein transformer (184 aa).

Basic and acidic residues-rich tracts occupy residues 1 to 39 (MKMDADSSGTEHRDSRGSRSRSWREREHHGRTSERDSRK) and 49 to 58 (DEVREQDRIR). 2 disordered regions span residues 1–123 (MKMD…PKII) and 146–184 (YQRLPRPPPFPPAPFRYRQRQPFMGAPRFGYRNAGRPPY). Basic residues-rich tracts occupy residues 59-75 (SLRQRAHQSTRRTRSRS) and 84-114 (SRHRRHRQRSRSRNRSRSRSSERRRRQRSPH). The span at 150 to 159 (PRPPPFPPAP) shows a compositional bias: pro residues.

It is found in the nucleus speckle. Its function is as follows. Member of the regulatory pathway controlling female somatic sexual differentiation, regulated by Sxl. Activates dsx female-specific splicing by promoting the formation of a splicing enhancer complex which consists of tra, tra2 and sr proteins. The chain is Female-specific protein transformer (tra) from Drosophila simulans (Fruit fly).